The chain runs to 24 residues: Acetylcholine receptor subunit alpha (24 aa).

Belongs to the ligand-gated ion channel (TC 1.A.9) family. Acetylcholine receptor (TC 1.A.9.1) subfamily. Alpha-1/CHRNA1 sub-subfamily. In terms of assembly, one of the alpha chains that assemble within the acetylcholine receptor, a pentamer of two alpha chains, a beta, a delta, and a gamma or epsilon chains.

Its subcellular location is the postsynaptic cell membrane. It is found in the cell membrane. The catalysed reaction is K(+)(in) = K(+)(out). It carries out the reaction Na(+)(in) = Na(+)(out). Its function is as follows. Upon acetylcholine binding, the AChR responds by an extensive change in conformation that affects all subunits and leads to opening of an ion-conducting channel across the plasma membrane. The sequence is that of Acetylcholine receptor subunit alpha (chrna1) from Electrophorus electricus (Electric eel).